The following is a 452-amino-acid chain: Pup--protein ligase (452 aa).

E9 lines the Mg(2+) pocket. R53 provides a ligand contact to ATP. A Mg(2+)-binding site is contributed by Y55. The active-site Proton acceptor is the D57. Mg(2+) is bound at residue E63. The ATP site is built by T66 and W419.

Belongs to the Pup ligase/Pup deamidase family. Pup-conjugating enzyme subfamily.

It catalyses the reaction ATP + [prokaryotic ubiquitin-like protein]-L-glutamate + [protein]-L-lysine = ADP + phosphate + N(6)-([prokaryotic ubiquitin-like protein]-gamma-L-glutamyl)-[protein]-L-lysine.. Its pathway is protein degradation; proteasomal Pup-dependent pathway. It participates in protein modification; protein pupylation. In terms of biological role, catalyzes the covalent attachment of the prokaryotic ubiquitin-like protein modifier Pup to the proteasomal substrate proteins, thereby targeting them for proteasomal degradation. This tagging system is termed pupylation. The ligation reaction involves the side-chain carboxylate of the C-terminal glutamate of Pup and the side-chain amino group of a substrate lysine. The protein is Pup--protein ligase of Geodermatophilus obscurus (strain ATCC 25078 / DSM 43160 / JCM 3152 / CCUG 61914 / KCC A-0152 / KCTC 9177 / NBRC 13315 / NRRL B-3577 / G-20).